The sequence spans 455 residues: Ribulose bisphosphate carboxylase large chain (455 aa).

Position 5 is an N6,N6,N6-trimethyllysine (Lys5). Substrate contacts are provided by Asn114 and Thr164. The Proton acceptor role is filled by Lys166. Substrate is bound at residue Lys168. The Mg(2+) site is built by Lys192, Asp194, and Glu195. Lys192 is modified (N6-carboxylysine). Catalysis depends on His285, which acts as the Proton acceptor. The substrate site is built by Arg286, His318, and Ser370.

The protein belongs to the RuBisCO large chain family. Type I subfamily. In terms of assembly, heterohexadecamer of 8 large chains and 8 small chains; disulfide-linked. The disulfide link is formed within the large subunit homodimers. The cofactor is Mg(2+). Post-translationally, the disulfide bond which can form in the large chain dimeric partners within the hexadecamer appears to be associated with oxidative stress and protein turnover.

It is found in the plastid. The protein resides in the chloroplast. The catalysed reaction is 2 (2R)-3-phosphoglycerate + 2 H(+) = D-ribulose 1,5-bisphosphate + CO2 + H2O. It catalyses the reaction D-ribulose 1,5-bisphosphate + O2 = 2-phosphoglycolate + (2R)-3-phosphoglycerate + 2 H(+). RuBisCO catalyzes two reactions: the carboxylation of D-ribulose 1,5-bisphosphate, the primary event in carbon dioxide fixation, as well as the oxidative fragmentation of the pentose substrate in the photorespiration process. Both reactions occur simultaneously and in competition at the same active site. The chain is Ribulose bisphosphate carboxylase large chain from Vachellia farnesiana (Sweet acacia).